Consider the following 99-residue polypeptide: DNA-binding protein HU (99 aa).

The disordered stretch occupies residues arginine 67–proline 86.

This sequence belongs to the bacterial histone-like protein family. As to quaternary structure, homodimer.

Its function is as follows. Histone-like DNA-binding protein which is capable of wrapping DNA to stabilize it, and thus to prevent its denaturation under extreme environmental conditions. The sequence is that of DNA-binding protein HU (hup) from Rickettsia felis (strain ATCC VR-1525 / URRWXCal2) (Rickettsia azadi).